The sequence spans 311 residues: Protoheme IX farnesyltransferase (311 aa).

8 helical membrane-spanning segments follow: residues 39–59, 61–81, 111–131, 133–153, 162–182, 187–207, 246–266, and 287–307; these read LLAM…PIGE, LPEI…AGAF, ALVL…VASP, AALF…MWSK, IGSV…SGDL, IIGL…AIAI, FFFV…SLIW, and FVFS…FSLL.

Belongs to the UbiA prenyltransferase family. Protoheme IX farnesyltransferase subfamily. As to quaternary structure, interacts with CtaA.

The protein localises to the cell membrane. It carries out the reaction heme b + (2E,6E)-farnesyl diphosphate + H2O = Fe(II)-heme o + diphosphate. It participates in porphyrin-containing compound metabolism; heme O biosynthesis; heme O from protoheme: step 1/1. In terms of biological role, converts heme B (protoheme IX) to heme O by substitution of the vinyl group on carbon 2 of heme B porphyrin ring with a hydroxyethyl farnesyl side group. The protein is Protoheme IX farnesyltransferase of Shouchella clausii (strain KSM-K16) (Alkalihalobacillus clausii).